The sequence spans 405 residues: Acetate kinase (405 aa).

N7 contacts Mg(2+). K14 contacts ATP. Position 99 (R99) interacts with substrate. D156 acts as the Proton donor/acceptor in catalysis. H215–G219 is a binding site for ATP. E391 contributes to the Mg(2+) binding site.

Belongs to the acetokinase family. In terms of assembly, homodimer. It depends on Mg(2+) as a cofactor. Mn(2+) serves as cofactor.

It is found in the cytoplasm. It catalyses the reaction acetate + ATP = acetyl phosphate + ADP. The protein operates within metabolic intermediate biosynthesis; acetyl-CoA biosynthesis; acetyl-CoA from acetate: step 1/2. Functionally, catalyzes the formation of acetyl phosphate from acetate and ATP. Can also catalyze the reverse reaction. The polypeptide is Acetate kinase (Nostoc sp. (strain PCC 7120 / SAG 25.82 / UTEX 2576)).